Here is a 798-residue protein sequence, read N- to C-terminus: Phenylalanine--tRNA ligase beta subunit (798 aa).

The 110-residue stretch at 39-148 folds into the tRNA-binding domain; that stretch reads SKHLGGFVVG…VTLAVGASLL (110 aa). The 76-residue stretch at 401–476 folds into the B5 domain; the sequence is DWQKSIVLRP…RINGYDNIPA (76 aa). Residues aspartate 454, aspartate 460, glutamate 463, and glutamate 464 each contribute to the Mg(2+) site. An FDX-ACB domain is found at 704–797; the sequence is SALQPLDRDF…VAKATGGELR (94 aa).

The protein belongs to the phenylalanyl-tRNA synthetase beta subunit family. Type 1 subfamily. Tetramer of two alpha and two beta subunits. Mg(2+) serves as cofactor.

The protein resides in the cytoplasm. It catalyses the reaction tRNA(Phe) + L-phenylalanine + ATP = L-phenylalanyl-tRNA(Phe) + AMP + diphosphate + H(+). This Paramagnetospirillum magneticum (strain ATCC 700264 / AMB-1) (Magnetospirillum magneticum) protein is Phenylalanine--tRNA ligase beta subunit.